Reading from the N-terminus, the 156-residue chain is Envelope glycoprotein L (156 aa).

The N-terminal stretch at 1 to 16 (MSPLVAVLVFFSAALG) is a signal peptide. The tract at residues 21–141 (GVAGNPHGLD…KELGEVAVHK (121 aa)) is interaction with gH. In terms of domain architecture, gL alphaherpesvirus-type spans 50 to 156 (ELEWDDEDHP…LRYNGGPPAE (107 aa)). C71 and C95 form a disulfide bridge.

This sequence belongs to the herpesviridae glycoprotein L (gL) family. Alphaherpesvirinae gL subfamily. As to quaternary structure, interacts with glycoprotein H (gH); this interaction is necessary for the correct processing and cell surface expression of gH. The heterodimer gH/gL seems to interact with gB trimers during fusion. In terms of processing, O-glycosylated, and sialylated.

The protein localises to the virion membrane. Its subcellular location is the host cell membrane. It localises to the host Golgi apparatus. The protein resides in the host trans-Golgi network. In terms of biological role, the heterodimer glycoprotein H-glycoprotein L is required for the fusion of viral and plasma membranes leading to virus entry into the host cell. Acts as a functional inhibitor of gH and maintains gH in an inhibited form. Upon binding to host integrins, gL dissociates from gH leading to activation of the viral fusion glycoproteins gB and gH. The protein is Envelope glycoprotein L of Sus scrofa (Pig).